A 451-amino-acid chain; its full sequence is Bifunctional protein GlmU (451 aa).

The pyrophosphorylase stretch occupies residues methionine 1–arginine 225. Residues leucine 7–glycine 10, lysine 21, glutamine 72, glycine 77–threonine 78, tyrosine 99–aspartate 101, glycine 136, glutamate 150, asparagine 165, and asparagine 223 contribute to the UDP-N-acetyl-alpha-D-glucosamine site. Aspartate 101 serves as a coordination point for Mg(2+). Asparagine 223 lines the Mg(2+) pocket. The interval leucine 226–alanine 246 is linker. An N-acetyltransferase region spans residues glycine 247–lysine 451. Arginine 329 and lysine 347 together coordinate UDP-N-acetyl-alpha-D-glucosamine. Histidine 359 acts as the Proton acceptor in catalysis. The UDP-N-acetyl-alpha-D-glucosamine site is built by tyrosine 362 and asparagine 373. Acetyl-CoA contacts are provided by residues alanine 376, asparagine 382–tyrosine 383, serine 401, alanine 419, and arginine 436.

This sequence in the N-terminal section; belongs to the N-acetylglucosamine-1-phosphate uridyltransferase family. In the C-terminal section; belongs to the transferase hexapeptide repeat family. In terms of assembly, homotrimer. It depends on Mg(2+) as a cofactor.

It is found in the cytoplasm. The catalysed reaction is alpha-D-glucosamine 1-phosphate + acetyl-CoA = N-acetyl-alpha-D-glucosamine 1-phosphate + CoA + H(+). It carries out the reaction N-acetyl-alpha-D-glucosamine 1-phosphate + UTP + H(+) = UDP-N-acetyl-alpha-D-glucosamine + diphosphate. Its pathway is nucleotide-sugar biosynthesis; UDP-N-acetyl-alpha-D-glucosamine biosynthesis; N-acetyl-alpha-D-glucosamine 1-phosphate from alpha-D-glucosamine 6-phosphate (route II): step 2/2. It participates in nucleotide-sugar biosynthesis; UDP-N-acetyl-alpha-D-glucosamine biosynthesis; UDP-N-acetyl-alpha-D-glucosamine from N-acetyl-alpha-D-glucosamine 1-phosphate: step 1/1. It functions in the pathway bacterial outer membrane biogenesis; LPS lipid A biosynthesis. Catalyzes the last two sequential reactions in the de novo biosynthetic pathway for UDP-N-acetylglucosamine (UDP-GlcNAc). The C-terminal domain catalyzes the transfer of acetyl group from acetyl coenzyme A to glucosamine-1-phosphate (GlcN-1-P) to produce N-acetylglucosamine-1-phosphate (GlcNAc-1-P), which is converted into UDP-GlcNAc by the transfer of uridine 5-monophosphate (from uridine 5-triphosphate), a reaction catalyzed by the N-terminal domain. The polypeptide is Bifunctional protein GlmU (Saccharophagus degradans (strain 2-40 / ATCC 43961 / DSM 17024)).